The sequence spans 412 residues: UPF0754 membrane protein Synpcc7942_1098 (412 aa).

2 helical membrane passes run 8 to 28 (LWLL…DLAI) and 390 to 410 (IGGV…VWSL).

The protein belongs to the UPF0754 family.

It localises to the cell inner membrane. This chain is UPF0754 membrane protein Synpcc7942_1098, found in Synechococcus elongatus (strain ATCC 33912 / PCC 7942 / FACHB-805) (Anacystis nidulans R2).